The sequence spans 298 residues: HTH-type transcriptional regulator ArgP (298 aa).

The 57-residue stretch at 4 to 60 (LDYKWIEALDAVVYQGSFERAAEHLFVSQSAISQRIKQLEKFLAQPVLIREQPPKPT) folds into the HTH lysR-type domain. Residues 21-40 (FERAAEHLFVSQSAISQRIK) constitute a DNA-binding region (H-T-H motif).

The protein belongs to the LysR transcriptional regulatory family. In terms of assembly, homodimer.

Controls the transcription of genes involved in arginine and lysine metabolism. The polypeptide is HTH-type transcriptional regulator ArgP (Vibrio parahaemolyticus serotype O3:K6 (strain RIMD 2210633)).